A 203-amino-acid chain; its full sequence is Probable cytochrome c oxidase subunit 3 (203 aa).

The next 5 helical transmembrane spans lie at 30-50 (IVWL…YFTA), 70-90 (AVPV…GVFA), 102-122 (WYVI…YEYY), 142-162 (LATG…IFLL), and 179-199 (IVVS…FTVI).

This sequence belongs to the cytochrome c oxidase subunit 3 family.

The protein resides in the cell membrane. It catalyses the reaction 4 Fe(II)-[cytochrome c] + O2 + 8 H(+)(in) = 4 Fe(III)-[cytochrome c] + 2 H2O + 4 H(+)(out). The sequence is that of Probable cytochrome c oxidase subunit 3 (ctaE) from Mycolicibacterium paratuberculosis (strain ATCC BAA-968 / K-10) (Mycobacterium paratuberculosis).